The primary structure comprises 201 residues: MARYTGPKSRIARKFGEGIFGADKVLSKKNYPPGQHGNNRRRKTSEYGVMLAEKQKAKYTYGVLEKQFRNLFEKAASANGITGEILLQSLEARLDNVVFRLGIAPTRAAARQLVSHKHITVDGKVVNIPSFSVKPGQIVGVRERSKSLEVIANSLAGFNHSKYPWLEWDESSKVGKLLHIPERADIPENIKEHLIVELYSK.

In terms of domain architecture, S4 RNA-binding spans 92 to 155 (ARLDNVVFRL…KSLEVIANSL (64 aa)).

This sequence belongs to the universal ribosomal protein uS4 family. Part of the 30S ribosomal subunit. Contacts protein S5. The interaction surface between S4 and S5 is involved in control of translational fidelity.

One of the primary rRNA binding proteins, it binds directly to 16S rRNA where it nucleates assembly of the body of the 30S subunit. Its function is as follows. With S5 and S12 plays an important role in translational accuracy. This Phocaeicola vulgatus (strain ATCC 8482 / DSM 1447 / JCM 5826 / CCUG 4940 / NBRC 14291 / NCTC 11154) (Bacteroides vulgatus) protein is Small ribosomal subunit protein uS4.